A 169-amino-acid chain; its full sequence is Shikimate kinase (169 aa).

Residue 13–18 (GAGKST) participates in ATP binding. S17 serves as a coordination point for Mg(2+). Residues D35, R59, and G80 each coordinate substrate. R117 contacts ATP. R136 contacts substrate. ATP is bound at residue R153.

This sequence belongs to the shikimate kinase family. As to quaternary structure, monomer. Mg(2+) is required as a cofactor.

The protein resides in the cytoplasm. The enzyme catalyses shikimate + ATP = 3-phosphoshikimate + ADP + H(+). The protein operates within metabolic intermediate biosynthesis; chorismate biosynthesis; chorismate from D-erythrose 4-phosphate and phosphoenolpyruvate: step 5/7. Functionally, catalyzes the specific phosphorylation of the 3-hydroxyl group of shikimic acid using ATP as a cosubstrate. In Corynebacterium efficiens (strain DSM 44549 / YS-314 / AJ 12310 / JCM 11189 / NBRC 100395), this protein is Shikimate kinase.